The sequence spans 385 residues: Alanine racemase (385 aa).

Lysine 40 serves as the catalytic Proton acceptor; specific for D-alanine. Lysine 40 carries the post-translational modification N6-(pyridoxal phosphate)lysine. Arginine 139 is a substrate binding site. Tyrosine 268 functions as the Proton acceptor; specific for L-alanine in the catalytic mechanism. Residue methionine 315 participates in substrate binding.

This sequence belongs to the alanine racemase family. Pyridoxal 5'-phosphate is required as a cofactor.

The catalysed reaction is L-alanine = D-alanine. Its pathway is amino-acid biosynthesis; D-alanine biosynthesis; D-alanine from L-alanine: step 1/1. In terms of biological role, catalyzes the interconversion of L-alanine and D-alanine. May also act on other amino acids. The sequence is that of Alanine racemase (alr) from Anoxybacillus flavithermus (strain DSM 21510 / WK1).